The sequence spans 176 residues: Conjugal transfer protein TraF (176 aa).

An N-terminal signal peptide occupies residues 1–23 (MRHRRALLFLTGAAVFVSALTAA).

It belongs to the peptidase S26C family.

It is found in the periplasm. Its function is as follows. Involved in conjugal transfer of the plasmid. This chain is Conjugal transfer protein TraF (traF), found in Agrobacterium tumefaciens (strain 15955).